The sequence spans 445 residues: Phosphoglucosamine mutase (445 aa).

Ser101 functions as the Phosphoserine intermediate in the catalytic mechanism. Residues Ser101, Asp240, Asp242, and Asp244 each coordinate Mg(2+). The residue at position 101 (Ser101) is a Phosphoserine.

Belongs to the phosphohexose mutase family. Mg(2+) serves as cofactor. Post-translationally, activated by phosphorylation.

The enzyme catalyses alpha-D-glucosamine 1-phosphate = D-glucosamine 6-phosphate. In terms of biological role, catalyzes the conversion of glucosamine-6-phosphate to glucosamine-1-phosphate. The chain is Phosphoglucosamine mutase from Pseudomonas fluorescens (strain ATCC BAA-477 / NRRL B-23932 / Pf-5).